Reading from the N-terminus, the 227-residue chain is Isopentenyl-diphosphate Delta-isomerase 1 (227 aa).

Lys-36 is a substrate binding site. Positions 40 and 51 each coordinate Mg(2+). The 151-residue stretch at 49–199 (LLHRAFSVFL…EIKITPWFKI (151 aa)) folds into the Nudix hydrolase domain. The substrate site is built by Arg-70 and Lys-74. Cys-86 is an active-site residue. Ser-87 is a substrate binding site. Positions 146 and 148 each coordinate Mg(2+). Glu-148 is a catalytic residue. Residue Lys-176 is modified to N6-acetyllysine. The Microbody targeting signal motif lies at 225–227 (YRM).

It belongs to the IPP isomerase type 1 family. Monomer. The cofactor is Mg(2+).

It localises to the peroxisome. The catalysed reaction is isopentenyl diphosphate = dimethylallyl diphosphate. It participates in isoprenoid biosynthesis; dimethylallyl diphosphate biosynthesis; dimethylallyl diphosphate from isopentenyl diphosphate: step 1/1. Functionally, catalyzes the 1,3-allylic rearrangement of the homoallylic substrate isopentenyl (IPP) to its highly electrophilic allylic isomer, dimethylallyl diphosphate (DMAPP). The chain is Isopentenyl-diphosphate Delta-isomerase 1 (IDI1) from Homo sapiens (Human).